Reading from the N-terminus, the 340-residue chain is Putative 2-hydroxyacid dehydrogenase C1773.17c (340 aa).

NAD(+) is bound by residues 169–170, 249–251, and D275; these read AI and TAR. R251 is a catalytic residue. E280 is an active-site residue. H298 acts as the Proton donor in catalysis. Residue 298-301 coordinates NAD(+); the sequence is HCGV.

This sequence belongs to the D-isomer specific 2-hydroxyacid dehydrogenase family.

The protein is Putative 2-hydroxyacid dehydrogenase C1773.17c of Schizosaccharomyces pombe (strain 972 / ATCC 24843) (Fission yeast).